Here is a 783-residue protein sequence, read N- to C-terminus: Serine/threonine-protein kinase SIK1 (783 aa).

Residues 27-278 enclose the Protein kinase domain; that stretch reads YDIERTLGKG…IAQIRQHRWM (252 aa). ATP-binding positions include 33–41 and K56; that span reads LGKGNFAVV. D149 serves as the catalytic Proton acceptor. At T182 the chain carries Phosphothreonine; by LKB1 and GSK3-beta. S186 is modified (phosphoserine; by autocatalysis). Positions 303–343 constitute a UBA domain; sequence DYDEQALGIMQTLGVDRQRTVESLQNSSYNHFAAIYYLLLE. Phosphothreonine; by CaMK1 is present on T322. 2 disordered regions span residues 353 to 377 and 449 to 477; these read CARPGPARQPRPRSSDLSGLEVPQE and RQGPGLEEEQDTQESLPSSTGRRHTLAEV. A Phosphothreonine; by PKA modification is found at T473. Residue S575 is modified to Phosphoserine; by PKA. The tract at residues 583-612 is RK-rich region; required for cAMP responsiveness and nuclear localization; the sequence is LKAFRQQLRKTTRTKGFLGLNKIKGLARQV. The disordered stretch occupies residues 619–643; it reads RASRGGLSPFHAPAQSPGLHGGAAG.

Belongs to the protein kinase superfamily. CAMK Ser/Thr protein kinase family. AMPK subfamily. In terms of assembly, interacts with ATP1A1. Interacts (when phosphorylated on Thr-182 and Ser-186) with YWHAZ. Interacts (when phosphorylated at Thr-473 and/or Ser-575) with 14-3-3 proteins; the interaction inhibits kinase activity towards TORCs. There is a cooperative effect of the phosphorylation sites in 14-3-3 binding as the interaction is stronger when both Thr-473 and Ser-575 are modified. Mg(2+) serves as cofactor. Post-translationally, phosphorylated at Thr-182 by STK11/LKB1 in complex with STE20-related adapter-alpha (STRADA) pseudo kinase and CAB39, leading to its activation. Phosphorylation at Thr-182 promotes autophosphorylation at Ser-186, which is required for sustained activity. Autophosphorylation at Ser-186 is maintained by sequential phosphorylation at Thr-182 by GSK3-beta. GSK3-beta cannot initiate phosphorylation at Thr-182, it can only maintain it. Phosphorylation at Ser-575 in response to cAMP signaling promotes translocation to the cytoplasm. Phosphorylation at Thr-322 by CaMK1 following intracellular sodium concentration leads to activation.

The protein localises to the cytoplasm. The protein resides in the nucleus. It catalyses the reaction L-seryl-[protein] + ATP = O-phospho-L-seryl-[protein] + ADP + H(+). The catalysed reaction is L-threonyl-[protein] + ATP = O-phospho-L-threonyl-[protein] + ADP + H(+). Its activity is regulated as follows. Activated by phosphorylation on Thr-182. Also activated by phosphorylation on Thr-322 in response to increases in intracellular sodium in parallel with elevations in intracellular calcium through the reversible sodium/calcium exchanger. Inhibited by phosphorylation at Thr-473 and Ser-575, probably by PKA, which triggers interaction with 14-3-3 proteins. Functionally, serine/threonine-protein kinase involved in various processes such as cell cycle regulation, gluconeogenesis and lipogenesis regulation, muscle growth and differentiation and tumor suppression. Phosphorylates HDAC4, HDAC5, PPME1, SREBF1, CRTC1/TORC1. Inhibits CREB activity by phosphorylating and inhibiting activity of TORCs, the CREB-specific coactivators, like CRTC2/TORC2 and CRTC3/TORC3 in response to cAMP signaling. Acts as a tumor suppressor and plays a key role in p53/TP53-dependent anoikis, a type of apoptosis triggered by cell detachment: required for phosphorylation of p53/TP53 in response to loss of adhesion and is able to suppress metastasis. Part of a sodium-sensing signaling network, probably by mediating phosphorylation of PPME1: following increases in intracellular sodium, SIK1 is activated by CaMK1 and phosphorylates PPME1 subunit of protein phosphatase 2A (PP2A), leading to dephosphorylation of sodium/potassium-transporting ATPase ATP1A1 and subsequent increase activity of ATP1A1. Acts as a regulator of muscle cells by phosphorylating and inhibiting class II histone deacetylases HDAC4 and HDAC5, leading to promote expression of MEF2 target genes in myocytes. Also required during cardiomyogenesis by regulating the exit of cardiomyoblasts from the cell cycle via down-regulation of CDKN1C/p57Kip2. Acts as a regulator of hepatic gluconeogenesis by phosphorylating and repressing the CREB-specific coactivators CRTC1/TORC1 and CRTC2/TORC2, leading to inhibit CREB activity. Also regulates hepatic lipogenesis by phosphorylating and inhibiting SREBF1. In concert with CRTC1/TORC1, regulates the light-induced entrainment of the circadian clock by attenuating PER1 induction; represses CREB-mediated transcription of PER1 by phosphorylating and deactivating CRTC1/TORC1. This Homo sapiens (Human) protein is Serine/threonine-protein kinase SIK1 (SIK1).